A 557-amino-acid polypeptide reads, in one-letter code: Dihydroxy-acid dehydratase (557 aa).

Residue D78 participates in Mg(2+) binding. A [2Fe-2S] cluster-binding site is contributed by C119. The Mg(2+) site is built by D120 and K121. An N6-carboxylysine modification is found at K121. Residue C192 participates in [2Fe-2S] cluster binding. E442 contacts Mg(2+). S468 functions as the Proton acceptor in the catalytic mechanism.

This sequence belongs to the IlvD/Edd family. Homodimer. The cofactor is [2Fe-2S] cluster. Requires Mg(2+) as cofactor.

It catalyses the reaction (2R)-2,3-dihydroxy-3-methylbutanoate = 3-methyl-2-oxobutanoate + H2O. The enzyme catalyses (2R,3R)-2,3-dihydroxy-3-methylpentanoate = (S)-3-methyl-2-oxopentanoate + H2O. It participates in amino-acid biosynthesis; L-isoleucine biosynthesis; L-isoleucine from 2-oxobutanoate: step 3/4. It functions in the pathway amino-acid biosynthesis; L-valine biosynthesis; L-valine from pyruvate: step 3/4. Functionally, functions in the biosynthesis of branched-chain amino acids. Catalyzes the dehydration of (2R,3R)-2,3-dihydroxy-3-methylpentanoate (2,3-dihydroxy-3-methylvalerate) into 2-oxo-3-methylpentanoate (2-oxo-3-methylvalerate) and of (2R)-2,3-dihydroxy-3-methylbutanoate (2,3-dihydroxyisovalerate) into 2-oxo-3-methylbutanoate (2-oxoisovalerate), the penultimate precursor to L-isoleucine and L-valine, respectively. This is Dihydroxy-acid dehydratase from Bacillus cytotoxicus (strain DSM 22905 / CIP 110041 / 391-98 / NVH 391-98).